We begin with the raw amino-acid sequence, 567 residues long: Delta(24)-sterol reductase (567 aa).

The Lumenal portion of the chain corresponds to 1 to 24; sequence MSDLEAPLRPKRKKIWVDYFVKFR. Residues 25 to 45 traverse the membrane as a helical; Signal-anchor segment; the sequence is WILVIFVVLPISFTLYFLTYL. Residues 45–231 form the FAD-binding PCMH-type domain; that stretch reads LGDVRSEWKS…VAAEVKLIPI (187 aa). Topologically, residues 46 to 567 are cytoplasmic; sequence GDVRSEWKSF…AYPEVDQPPD (522 aa). Residues 520-541 are interaction with calmodulin; the sequence is CRRKYGAVGTFMSVYYKCKKGR. Residues 548-567 form a disordered region; sequence REAEQAHLDTAYPEVDQPPD.

The protein belongs to the DIMINUTO family. In terms of tissue distribution, highly expressed in the apical region and root tips and lower levels in immature and mature internodes and leaves.

The protein localises to the membrane. It carries out the reaction lathosterol + NADP(+) = 5alpha-cholesta-7,24-dien-3beta-ol + NADPH + H(+). Its function is as follows. Plays a critical role in the general process of plant cell elongation. This is Delta(24)-sterol reductase (DIM) from Pisum sativum (Garden pea).